Reading from the N-terminus, the 448-residue chain is Ribonuclease J (448 aa).

Residues histidine 81, histidine 83, aspartate 85, histidine 86, histidine 151, and aspartate 173 each coordinate Zn(2+). 383-387 (HVSGH) serves as a coordination point for substrate. Histidine 409 provides a ligand contact to Zn(2+).

This sequence belongs to the metallo-beta-lactamase superfamily. RNA-metabolizing metallo-beta-lactamase-like family. Archaeal RNase J subfamily. In terms of assembly, forms homodimers on heating to 60 degrees Celsius which may be the active form. Zn(2+) is required as a cofactor.

The protein localises to the cytoplasm. Inhibited by imidazole. Its function is as follows. A 5'-3' exoribonuclease with a strong reference for 5'-monophosphorylated RNA and no endoribonuclease activty. Also has robust 5'-'3 nuclease activity on single-stranded DNA (exodeoxyribonuclease, exoDNase). May be involved in RNA degradation. The sequence is that of Ribonuclease J from Methanocaldococcus jannaschii (strain ATCC 43067 / DSM 2661 / JAL-1 / JCM 10045 / NBRC 100440) (Methanococcus jannaschii).